We begin with the raw amino-acid sequence, 237 residues long: Putative glutathione-dependent formaldehyde-activating enzyme (237 aa).

Residues 38–152 (ITLICHCPPS…LGQSGGSEGE (115 aa)) enclose the CENP-V/GFA domain. Positions 42, 44, 67, 69, 72, 114, and 117 each coordinate Zn(2+).

The protein belongs to the Gfa family. Requires Zn(2+) as cofactor.

It carries out the reaction S-(hydroxymethyl)glutathione = glutathione + formaldehyde. It functions in the pathway one-carbon metabolism; formaldehyde degradation; formate from formaldehyde (glutathione route): step 1/3. In terms of biological role, catalyzes the condensation of formaldehyde and glutathione to S-hydroxymethylglutathione. In Sordaria macrospora (strain ATCC MYA-333 / DSM 997 / K(L3346) / K-hell), this protein is Putative glutathione-dependent formaldehyde-activating enzyme.